Here is a 273-residue protein sequence, read N- to C-terminus: MKNKTKIIISGALGRMGKILIKETKKNKLIKLVYALINNNIDIKNHNQFYKVKEKKKFITLNNLKKKKKILKFDTIIDFSSPKYSIKIIKYCLKNNKKIVLGTTGFNTEQIKIINNASKKIPIIYSPNFSIGINIIYKILKNISKILGKNSDIEIIESHHRNKIDAPSGTALQLGKIISKSMKWNFKKSAIFSRYGNIGIRKKKRIGFSTIREGNTIGEHTVLFSNKYEKISIFHKAIHRSVFAKGALKAAIWISRKKNGLYNMSDMLKKIKI.

NAD(+)-binding positions include Gly-11 to Met-16, Gly-102 to Thr-104, and Ser-126 to Phe-129. His-159 functions as the Proton donor/acceptor in the catalytic mechanism. His-160 provides a ligand contact to (S)-2,3,4,5-tetrahydrodipicolinate. Lys-163 serves as the catalytic Proton donor. Gly-169 to Thr-170 lines the (S)-2,3,4,5-tetrahydrodipicolinate pocket.

The protein belongs to the DapB family. In terms of assembly, homotetramer.

The protein localises to the cytoplasm. The enzyme catalyses (S)-2,3,4,5-tetrahydrodipicolinate + NAD(+) + H2O = (2S,4S)-4-hydroxy-2,3,4,5-tetrahydrodipicolinate + NADH + H(+). It catalyses the reaction (S)-2,3,4,5-tetrahydrodipicolinate + NADP(+) + H2O = (2S,4S)-4-hydroxy-2,3,4,5-tetrahydrodipicolinate + NADPH + H(+). It participates in amino-acid biosynthesis; L-lysine biosynthesis via DAP pathway; (S)-tetrahydrodipicolinate from L-aspartate: step 4/4. Its function is as follows. Catalyzes the conversion of 4-hydroxy-tetrahydrodipicolinate (HTPA) to tetrahydrodipicolinate. The polypeptide is 4-hydroxy-tetrahydrodipicolinate reductase (Buchnera aphidicola subsp. Cinara cedri (strain Cc)).